Reading from the N-terminus, the 114-residue chain is uncharacterized protein (114 aa).

The active site involves C10.

This sequence belongs to the ArsC family.

This is an uncharacterized protein from Haemophilus influenzae (strain ATCC 51907 / DSM 11121 / KW20 / Rd).